Here is a 423-residue protein sequence, read N- to C-terminus: Probable multifunctional protein ADE2 (423 aa).

The tract at residues 1–263 (MSSLAEIASR…KVMDITATFS (263 aa)) is SAICAR synthetase. Residues 264–423 (KHQQKCHVLV…NIYNANRKLE (160 aa)) are AIR carboxylase.

The protein in the N-terminal section; belongs to the SAICAR synthetase family. In the C-terminal section; belongs to the AIR carboxylase family. Class II subfamily.

It carries out the reaction 5-amino-1-(5-phospho-D-ribosyl)imidazole-4-carboxylate + L-aspartate + ATP = (2S)-2-[5-amino-1-(5-phospho-beta-D-ribosyl)imidazole-4-carboxamido]succinate + ADP + phosphate + 2 H(+). The enzyme catalyses 5-amino-1-(5-phospho-D-ribosyl)imidazole-4-carboxylate + H(+) = 5-amino-1-(5-phospho-beta-D-ribosyl)imidazole + CO2. It functions in the pathway purine metabolism; IMP biosynthesis via de novo pathway; 5-amino-1-(5-phospho-D-ribosyl)imidazole-4-carboxamide from 5-amino-1-(5-phospho-D-ribosyl)imidazole-4-carboxylate: step 1/2. The protein operates within purine metabolism; IMP biosynthesis via de novo pathway; 5-amino-1-(5-phospho-D-ribosyl)imidazole-4-carboxylate from 5-amino-1-(5-phospho-D-ribosyl)imidazole (carboxylase route): step 1/1. The sequence is that of Probable multifunctional protein ADE2 from Caenorhabditis elegans.